The primary structure comprises 298 residues: Glutamyl-Q tRNA(Asp) synthetase (298 aa).

L-glutamate contacts are provided by residues 8-12 (RFAPS) and Glu-44. The 'HIGH' region motif lies at 11–21 (PSPTGPLHFGS). Residues Cys-100, Cys-102, Tyr-123, and Cys-127 each contribute to the Zn(2+) site. Positions 183 and 201 each coordinate L-glutamate. The short motif at 239–243 (KLSKQ) is the 'KMSKS' region element. Lys-242 contributes to the ATP binding site.

This sequence belongs to the class-I aminoacyl-tRNA synthetase family. GluQ subfamily. It depends on Zn(2+) as a cofactor.

Its function is as follows. Catalyzes the tRNA-independent activation of glutamate in presence of ATP and the subsequent transfer of glutamate onto a tRNA(Asp). Glutamate is transferred on the 2-amino-5-(4,5-dihydroxy-2-cyclopenten-1-yl) moiety of the queuosine in the wobble position of the QUC anticodon. This Burkholderia cenocepacia (strain ATCC BAA-245 / DSM 16553 / LMG 16656 / NCTC 13227 / J2315 / CF5610) (Burkholderia cepacia (strain J2315)) protein is Glutamyl-Q tRNA(Asp) synthetase.